The primary structure comprises 1601 residues: MTDLNSESFSALNFWKSVEKKNISTNFQGTKVVAPSKKINSFPLLAPPAPPPPPTEQEINIGSGNSTFISSNNNNSNNNNNNNSNNNNNNNLNNSNNNNNNLNSNNNNNNNNNNNNNNGNNNNNSNFLTRQDSSTQKEWDEQNVTEAFGFWKQKAVQLQKETERYNARRNARQTIDLTNILRKSTSSDLLIKPPVESPPLTPVGQDDEGEQQQQQQQQKQSSPSTPSNDTDTETTAAAVTTTTTTTTTTTTSTTTTTTETVLQANQLEIKYGGETIAVVDDSGTTPRDYRRSRSISCEIIPKINGVITTSPQRVTTTTTTTTPSTGGVVVADEESDSSEEESDSSEEESDEYTDEESETELQVVSNATPRRSDDFTPTIVESPPLTSVNSNDNTSSGTVVAPIDLNSSTGGNTGSQQPPQPSSQQQKPDQASENTAVAASSISATTNVTSAASTTTVAPDSIINTKDVTVVSSTLTTTTSATSSTTSATTQSIPAPPSPSQQRAAQSISTSSVTPAAITKPTKDAKDKKDPAKKSIGATLTRTVTKTFIRDSKENNKVPTGTSPPVSSSTSISSSTGIKKDKVKLSKEEKDRIKKEKSAKKKKEKDEKKQQKTNKKALTKNNSSTDVKKGFVSPQQQQILDSPYRIYGVRLTQLVLSNDGDLPAILTQTITVLSNSNKLDVNSVFVGAENEPAVREIRKRSDLERIDFSIIGDPRVVAGLLILFFAELPQPLFNSKFFGDLVEINDITNPQVKLNDLKQLINSLSQLRRSLLQILVTFFTSKYINGNSVTTRAIAIQSIAQSFGPQFFRGTSSSDSDIQVGIETLKLIIDNYVFLFEKTNEPDVKYKNIDGKMIISEGSIDKLIDKATDQYYPYNEKYFSLTFFITHLFFIQPHELADKLITLYRENLDTLETKKKWKKHRRSKKASFINEAVKLWVDYCYKEMREDKELSKKILKGFPHLEAQLASRLSHRTTINDFLKLPKRVHSRTRSASFSDTLLSTGGIGSTSGGIGGGVNNCLLSAMEIAEQCTLVDYDLFTNVRLSDWVRLVQGSVDPQTAPSLSLALKRSTIWAQWAMGEILSTEDKSQRVAIINLLVDVAINCKDLANFNTAISIHTALTNHHIKRLQQTWDSVPKETLNKITQLEQSLQVWLKPDATNPFGVICQSINSACVPNFSILRTILSQIDQKIPTFSNDGSMVNVEKLRTIFGIVVEIQRLQQQRNYTMKPTKLFIQLQDINTVSMDELADLSLKCEPPVSKAKKYNAPADIVDEDWRLKITKTFNKPLATTSVGIDLPRLASSFTFNTTGHKTTPEEKSAYGNKIQDIFHVLVSLAQIESSELETDVREKFTTYIPMSTDPDSDFKRELLKFLDEVCHADNSKLVRVLKCCNQAIIAPVIIEITLNIAKGVPFMDAGGWRILISNINNSNNSVILDKIDEINEDSSNVEKEKLSSSQEQQEQQEQKQQEQQQQQQEPQPLFIRHYKKQRSRSAQSKDFFEFEWFIQLNLDADCKNILSFDLKISNLVFSTDTSPNIRDQLLESFKSYLVSQECVQYINFNENKQPVAAPVTPATTIVTTKEESTTVTSSTTTVVQESVPSTNAE.

4 disordered regions span residues 43–140 (PLLA…KEWD), 188–256 (DLLI…TTTT), 310–461 (SPQR…APDS), and 475–630 (LTTT…VKKG). Pro residues predominate over residues 45–55 (LAPPAPPPPPT). A compositionally biased stretch (polar residues) spans 57–69 (QEINIGSGNSTFI). Residues 70 to 126 (SSNNNNSNNNNNNNSNNNNNNNLNNSNNNNNNLNSNNNNNNNNNNNNNNGNNNNNSN) show a composition bias toward low complexity. Phosphoserine is present on Ser197. Thr201 carries the post-translational modification Phosphothreonine. Low complexity-rich tracts occupy residues 211–256 (QQQQ…TTTT) and 310–330 (SPQRVTTTTTTTTPSTGGVVV). Residues 331-359 (ADEESDSSEEESDSSEEESDEYTDEESET) are compositionally biased toward acidic residues. Over residues 384–398 (PLTSVNSNDNTSSGT) the composition is skewed to polar residues. Low complexity-rich tracts occupy residues 435–458 (TAVAASSISATTNVTSAASTTTVA), 475–493 (LTTTTSATSSTTSATTQSI), and 500–520 (SQQRAAQSISTSSVTPAAITK). Positions 521–533 (PTKDAKDKKDPAK) are enriched in basic and acidic residues. Low complexity predominate over residues 558 to 577 (VPTGTSPPVSSSTSISSSTG). Residues 578-596 (IKKDKVKLSKEEKDRIKKE) are compositionally biased toward basic and acidic residues. Residues 649–836 (VRLTQLVLSN…LIIDNYVFLF (188 aa)) enclose the Rho-GAP domain. Positions 851 to 983 (GKMIISEGSI…TINDFLKLPK (133 aa)) constitute an N-terminal Ras-GEF domain. Positions 1021 to 1255 (SAMEIAEQCT…ADLSLKCEPP (235 aa)) constitute a Ras-GEF domain. The tract at residues 1262–1601 (YNAPADIVDE…QESVPSTNAE (340 aa)) is N-terminal F-actin-binding domain. Residues 1443-1474 (SNVEKEKLSSSQEQQEQQEQKQQEQQQQQQEP) form a disordered region. The span at 1465 to 1474 (QEQQQQQQEP) shows a compositional bias: low complexity.

Interacts with gpaB and rapA. Interacts directly with F-actin. In terms of processing, simultaneously phosphorylated at Ser-197 and Thr-201 after cAMP stimulation.

The protein localises to the cytoplasm. It localises to the cell cortex. It is found in the cytoskeleton. Its subcellular location is the cell projection. The protein resides in the filopodium. The protein localises to the lamellipodium. Functionally, gpaB-activated, rapA-specific guanine nucleotide exchange factor, involved in the regulation of the balance between Ras and Rap signaling at the leading edge of chemotaxing cells. Spatially localized activation of Rap and Ras induces F-actin polymerization at the leading edge of chemotaxing cells through the Rac, PI3K, and TORC2 pathways. Also acts as a key regulator of actin-driven membrane protrusions during processes such as phagocytosis and cytokinesis, possibly by modulating rapA signaling pathways. The protein is Ras guanine nucleotide exchange factor glfB of Dictyostelium discoideum (Social amoeba).